We begin with the raw amino-acid sequence, 318 residues long: NADH-ubiquinone oxidoreductase chain 1 (318 aa).

8 consecutive transmembrane segments (helical) span residues 2 to 22 (FTIN…FLTL), 70 to 90 (MFII…IPLP), 100 to 120 (LGVL…LWSG), 146 to 166 (LAII…STLI), 171 to 191 (HLWL…STLA), 222 to 242 (LFFM…TILF), 254 to 276 (LYTI…IRAS), and 294 to 314 (LPLT…TSSI).

It belongs to the complex I subunit 1 family. As to quaternary structure, core subunit of respiratory chain NADH dehydrogenase (Complex I) which is composed of 45 different subunits.

It localises to the mitochondrion inner membrane. The catalysed reaction is a ubiquinone + NADH + 5 H(+)(in) = a ubiquinol + NAD(+) + 4 H(+)(out). In terms of biological role, core subunit of the mitochondrial membrane respiratory chain NADH dehydrogenase (Complex I) which catalyzes electron transfer from NADH through the respiratory chain, using ubiquinone as an electron acceptor. Essential for the catalytic activity and assembly of complex I. This is NADH-ubiquinone oxidoreductase chain 1 (MT-ND1) from Ceratotherium simum (White rhinoceros).